The primary structure comprises 356 residues: UDP-3-O-acylglucosamine N-acyltransferase (356 aa).

His242 (proton acceptor) is an active-site residue.

It belongs to the transferase hexapeptide repeat family. LpxD subfamily. In terms of assembly, homotrimer.

It carries out the reaction a UDP-3-O-[(3R)-3-hydroxyacyl]-alpha-D-glucosamine + a (3R)-hydroxyacyl-[ACP] = a UDP-2-N,3-O-bis[(3R)-3-hydroxyacyl]-alpha-D-glucosamine + holo-[ACP] + H(+). The protein operates within bacterial outer membrane biogenesis; LPS lipid A biosynthesis. In terms of biological role, catalyzes the N-acylation of UDP-3-O-acylglucosamine using 3-hydroxyacyl-ACP as the acyl donor. Is involved in the biosynthesis of lipid A, a phosphorylated glycolipid that anchors the lipopolysaccharide to the outer membrane of the cell. The sequence is that of UDP-3-O-acylglucosamine N-acyltransferase from Acinetobacter baumannii (strain ACICU).